The sequence spans 293 residues: Bifunctional protein FolD (293 aa).

NADP(+) is bound by residues Gly-165 to Ser-167, Ser-190, and Ile-231.

The protein belongs to the tetrahydrofolate dehydrogenase/cyclohydrolase family. In terms of assembly, homodimer.

It catalyses the reaction (6R)-5,10-methylene-5,6,7,8-tetrahydrofolate + NADP(+) = (6R)-5,10-methenyltetrahydrofolate + NADPH. The catalysed reaction is (6R)-5,10-methenyltetrahydrofolate + H2O = (6R)-10-formyltetrahydrofolate + H(+). It participates in one-carbon metabolism; tetrahydrofolate interconversion. Its function is as follows. Catalyzes the oxidation of 5,10-methylenetetrahydrofolate to 5,10-methenyltetrahydrofolate and then the hydrolysis of 5,10-methenyltetrahydrofolate to 10-formyltetrahydrofolate. This is Bifunctional protein FolD from Synechococcus sp. (strain CC9311).